A 172-amino-acid chain; its full sequence is Galectin-related protein (172 aa).

N-acetylalanine is present on Ala-2. Ser-22 and Ser-25 each carry phosphoserine. The 130-residue stretch at Pro-39 to Ile-168 folds into the Galectin domain.

In terms of assembly, monomer.

Does not bind lactose, and may not bind carbohydrates. This is Galectin-related protein (Lgalsl) from Mus musculus (Mouse).